The sequence spans 201 residues: Recombination protein RecR (201 aa).

The C4-type zinc-finger motif lies at 60-75 (CSCCGNVDTIDPCTVC). Residues 83 to 178 (SVIIVVEDVA…KITRLAHGVP (96 aa)) enclose the Toprim domain.

It belongs to the RecR family.

May play a role in DNA repair. It seems to be involved in an RecBC-independent recombinational process of DNA repair. It may act with RecF and RecO. This Sinorhizobium fredii (strain NBRC 101917 / NGR234) protein is Recombination protein RecR.